The sequence spans 365 residues: tRNA(Met) cytidine acetate ligase (365 aa).

ATP is bound by residues 7–20 (IAEFNPFHNGHKYL), Gly96, Asn152, and Arg175.

This sequence belongs to the TmcAL family.

The protein localises to the cytoplasm. The enzyme catalyses cytidine(34) in elongator tRNA(Met) + acetate + ATP = N(4)-acetylcytidine(34) in elongator tRNA(Met) + AMP + diphosphate. Catalyzes the formation of N(4)-acetylcytidine (ac(4)C) at the wobble position of elongator tRNA(Met), using acetate and ATP as substrates. First activates an acetate ion to form acetyladenylate (Ac-AMP) and then transfers the acetyl group to tRNA to form ac(4)C34. The chain is tRNA(Met) cytidine acetate ligase from Streptococcus pneumoniae serotype 19F (strain G54).